The sequence spans 72 residues: Small ribosomal subunit protein bS20 (72 aa).

Belongs to the bacterial ribosomal protein bS20 family.

Its function is as follows. Binds directly to 16S ribosomal RNA. The sequence is that of Small ribosomal subunit protein bS20 (rpsT) from Klebsiella pneumoniae.